The chain runs to 84 residues: U4-theraphotoxin-Hhn1a (84 aa).

Positions 1-22 (MKVTLIAILTCAAVLVLHTTAA) are cleaved as a signal peptide. A propeptide spanning residues 23–47 (EELEESQLMEVGMPDTELAAVDEER) is cleaved from the precursor. Disulfide bonds link Cys-51–Cys-65, Cys-55–Cys-76, and Cys-70–Cys-81.

This sequence belongs to the neurotoxin 12 (Hwtx-2) family. 02 (Hwtx-2) subfamily. In terms of tissue distribution, expressed by the venom gland.

It localises to the secreted. In terms of biological role, postsynaptic neurotoxin. This Cyriopagopus hainanus (Chinese bird spider) protein is U4-theraphotoxin-Hhn1a.